Consider the following 357-residue polypeptide: Phosphoribosylformylglycinamidine cyclo-ligase (357 aa).

This sequence belongs to the AIR synthase family.

It localises to the cytoplasm. The enzyme catalyses 2-formamido-N(1)-(5-O-phospho-beta-D-ribosyl)acetamidine + ATP = 5-amino-1-(5-phospho-beta-D-ribosyl)imidazole + ADP + phosphate + H(+). Its pathway is purine metabolism; IMP biosynthesis via de novo pathway; 5-amino-1-(5-phospho-D-ribosyl)imidazole from N(2)-formyl-N(1)-(5-phospho-D-ribosyl)glycinamide: step 2/2. The sequence is that of Phosphoribosylformylglycinamidine cyclo-ligase from Rhodopseudomonas palustris (strain BisB18).